An 892-amino-acid polypeptide reads, in one-letter code: Translation initiation factor IF-2 (892 aa).

Residues 88–305 (KKRTFVKRDP…SLQQGFQKPA (218 aa)) are disordered. Basic and acidic residues-rich tracts occupy residues 93–159 (VKRD…KDKV) and 166–216 (DMTK…EENK). Residues 254-269 (GRGRNAKAARPAKKGK) are compositionally biased toward basic residues. Positions 270-282 (HAESKADREEARA) are enriched in basic and acidic residues. The tr-type G domain maps to 391–560 (PRAPVVTIMG…LLQAEVLELK (170 aa)). The segment at 400-407 (GHVDHGKT) is G1. GTP is bound at residue 400-407 (GHVDHGKT). The segment at 425 to 429 (GITQH) is G2. Residues 446–449 (DTPG) form a G3 region. Residues 446–450 (DTPGH) and 500–503 (NKID) each bind GTP. Residues 500 to 503 (NKID) form a G4 region. The G5 stretch occupies residues 536–538 (SAK).

The protein belongs to the TRAFAC class translation factor GTPase superfamily. Classic translation factor GTPase family. IF-2 subfamily.

The protein localises to the cytoplasm. In terms of biological role, one of the essential components for the initiation of protein synthesis. Protects formylmethionyl-tRNA from spontaneous hydrolysis and promotes its binding to the 30S ribosomal subunits. Also involved in the hydrolysis of GTP during the formation of the 70S ribosomal complex. The chain is Translation initiation factor IF-2 from Salmonella paratyphi A (strain ATCC 9150 / SARB42).